Consider the following 600-residue polypeptide: UvrABC system protein C (600 aa).

Positions 15 to 92 (EKPGCYLMKD…IKKYQPYYNV (78 aa)) constitute a GIY-YIG domain. Positions 197-232 (GAVKQDLTQKMEQASEQLEFERAAEIRDQLKYIEET) constitute a UVR domain.

This sequence belongs to the UvrC family. As to quaternary structure, interacts with UvrB in an incision complex.

The protein resides in the cytoplasm. Functionally, the UvrABC repair system catalyzes the recognition and processing of DNA lesions. UvrC both incises the 5' and 3' sides of the lesion. The N-terminal half is responsible for the 3' incision and the C-terminal half is responsible for the 5' incision. The sequence is that of UvrABC system protein C from Lactobacillus helveticus (strain DPC 4571).